An 888-amino-acid polypeptide reads, in one-letter code: Valine--tRNA ligase (888 aa).

The 'HIGH' region motif lies at 43-53 (PFTSGTLHLGH). The short motif at 534 to 538 (KMSKS) is the 'KMSKS' region element. An ATP-binding site is contributed by K537.

This sequence belongs to the class-I aminoacyl-tRNA synthetase family. ValS type 2 subfamily.

The protein resides in the cytoplasm. It catalyses the reaction tRNA(Val) + L-valine + ATP = L-valyl-tRNA(Val) + AMP + diphosphate. Catalyzes the attachment of valine to tRNA(Val). As ValRS can inadvertently accommodate and process structurally similar amino acids such as threonine, to avoid such errors, it has a 'posttransfer' editing activity that hydrolyzes mischarged Thr-tRNA(Val) in a tRNA-dependent manner. This Thermococcus kodakarensis (strain ATCC BAA-918 / JCM 12380 / KOD1) (Pyrococcus kodakaraensis (strain KOD1)) protein is Valine--tRNA ligase.